The chain runs to 33 residues: Photosystem II reaction center protein Psb30 (33 aa).

A helical membrane pass occupies residues 5-25 (VLAQLTVLTLIVISGPLVIAL).

Belongs to the Psb30/Ycf12 family. As to quaternary structure, PSII is composed of 1 copy each of membrane proteins PsbA, PsbB, PsbC, PsbD, PsbE, PsbF, PsbH, PsbI, PsbJ, PsbK, PsbL, PsbM, PsbT, PsbX, PsbY, PsbZ, Psb30/Ycf12, peripheral proteins of the oxygen-evolving complex and a large number of cofactors. It forms dimeric complexes.

It is found in the plastid. The protein resides in the chloroplast thylakoid membrane. A core subunit of photosystem II (PSII), probably helps stabilize the reaction center. In Cycas taitungensis (Prince sago), this protein is Photosystem II reaction center protein Psb30.